The following is a 272-amino-acid chain: Shikimate dehydrogenase (NADP(+)) (272 aa).

Residues 14–16 and threonine 61 contribute to the shikimate site; that span reads SKS. Lysine 65 (proton acceptor) is an active-site residue. NADP(+) is bound at residue glutamate 77. Asparagine 86 and aspartate 102 together coordinate shikimate. NADP(+)-binding positions include 126–130, 149–154, and methionine 213; these read GAGGA and NRTASR. Position 215 (tyrosine 215) interacts with shikimate. Residue glycine 237 participates in NADP(+) binding.

Belongs to the shikimate dehydrogenase family. As to quaternary structure, homodimer.

It catalyses the reaction shikimate + NADP(+) = 3-dehydroshikimate + NADPH + H(+). Its pathway is metabolic intermediate biosynthesis; chorismate biosynthesis; chorismate from D-erythrose 4-phosphate and phosphoenolpyruvate: step 4/7. Involved in the biosynthesis of the chorismate, which leads to the biosynthesis of aromatic amino acids. Catalyzes the reversible NADPH linked reduction of 3-dehydroshikimate (DHSA) to yield shikimate (SA). In Salmonella heidelberg (strain SL476), this protein is Shikimate dehydrogenase (NADP(+)).